The following is a 161-amino-acid chain: Cyclic pyranopterin monophosphate synthase (161 aa).

Residues leucine 78–histidine 80 and methionine 116–glutamate 117 each bind substrate. The active site involves aspartate 131.

The protein belongs to the MoaC family. In terms of assembly, homohexamer; trimer of dimers.

It carries out the reaction (8S)-3',8-cyclo-7,8-dihydroguanosine 5'-triphosphate = cyclic pyranopterin phosphate + diphosphate. It functions in the pathway cofactor biosynthesis; molybdopterin biosynthesis. Catalyzes the conversion of (8S)-3',8-cyclo-7,8-dihydroguanosine 5'-triphosphate to cyclic pyranopterin monophosphate (cPMP). The polypeptide is Cyclic pyranopterin monophosphate synthase (Bordetella parapertussis (strain 12822 / ATCC BAA-587 / NCTC 13253)).